The sequence spans 59 residues: U-myrmeciitoxin(01)-Mg5a (59 aa).

The first 21 residues, 1-21 (MRLSYLSLALAIIFVLTIMHA), serve as a signal peptide directing secretion. Positions 22–38 (SNVEAKASADPEPDAVG) are excised as a propeptide.

Expressed by the venom gland.

The protein resides in the secreted. In terms of biological role, may have antimicrobial properties, like most ant linear peptides. The sequence is that of U-myrmeciitoxin(01)-Mg5a from Myrmecia gulosa (Red bulldog ant).